Reading from the N-terminus, the 380-residue chain is 4-hydroxy-3-methylbut-2-en-1-yl diphosphate synthase (flavodoxin) (380 aa).

Cys273, Cys276, Cys308, and Glu315 together coordinate [4Fe-4S] cluster.

Belongs to the IspG family. It depends on [4Fe-4S] cluster as a cofactor.

The catalysed reaction is (2E)-4-hydroxy-3-methylbut-2-enyl diphosphate + oxidized [flavodoxin] + H2O + 2 H(+) = 2-C-methyl-D-erythritol 2,4-cyclic diphosphate + reduced [flavodoxin]. Its pathway is isoprenoid biosynthesis; isopentenyl diphosphate biosynthesis via DXP pathway; isopentenyl diphosphate from 1-deoxy-D-xylulose 5-phosphate: step 5/6. Functionally, converts 2C-methyl-D-erythritol 2,4-cyclodiphosphate (ME-2,4cPP) into 1-hydroxy-2-methyl-2-(E)-butenyl 4-diphosphate. In Leifsonia xyli subsp. xyli (strain CTCB07), this protein is 4-hydroxy-3-methylbut-2-en-1-yl diphosphate synthase (flavodoxin).